A 146-amino-acid polypeptide reads, in one-letter code: Hemoglobin subunit beta (146 aa).

Residues 2–146 (HWSAEEKQLI…VAHALARKYH (145 aa)) enclose the Globin domain. Residues H63 and H92 each contribute to the heme b site.

It belongs to the globin family. Heterotetramer of two alpha chains and two beta chains. As to expression, red blood cells.

Involved in oxygen transport from the lung to the various peripheral tissues. The protein is Hemoglobin subunit beta (HBB) of Anser indicus (Bar-headed goose).